Consider the following 375-residue polypeptide: Trichodiene synthase (375 aa).

The protein belongs to the trichodiene synthase family.

The enzyme catalyses (2E,6E)-farnesyl diphosphate = trichodiene + diphosphate. It participates in sesquiterpene biosynthesis; trichothecene biosynthesis. Functionally, TS is a member of the terpene cyclase group of enzymes. It catalyzes the isomerization and cyclization of farnesyl pyro-phosphate to form trichodiene, the first cyclic intermediate in the biosynthetic pathway for trichothecenes. It serves to branch trichothecene biosynthesis from the isoprenoid pathway. The chain is Trichodiene synthase (TRI5) from Fusarium pseudograminearum (Wheat and barley crown-rot fungus).